The sequence spans 382 residues: Albumin (382 aa).

2 consecutive Albumin domains span residues 1 to 178 and 179 to 377; these read KCRI…ILLE and AALK…GLLQ. Intrachain disulfides connect Cys2–Cys48, Cys47–Cys55, Cys67–Cys81, Cys80–Cys91, Cys116–Cys161, Cys160–Cys169, Cys192–Cys238, Cys237–Cys248, Cys261–Cys277, Cys276–Cys287, Cys314–Cys359, and Cys358–Cys367. Ca(2+)-binding residues include Asp51 and Glu54. Asp51 is a Zn(2+) binding site.

Belongs to the ALB/AFP/VDB family. Plasma.

The protein resides in the secreted. Serum albumin, the main protein of plasma, has a good binding capacity for water, Ca(2+), Na(+), K(+), fatty acids, hormones, bilirubin and drugs. Its main function is the regulation of the colloidal osmotic pressure of blood. In Aquarana catesbeiana (American bullfrog), this protein is Albumin (ALB).